The sequence spans 132 residues: Histone H2A.2 (132 aa).

The protein belongs to the histone H2A family. In terms of assembly, the nucleosome is a histone octamer containing two molecules each of H2A, H2B, H3 and H4 assembled in one H3-H4 heterotetramer and two H2A-H2B heterodimers. The octamer wraps approximately 147 bp of DNA.

It localises to the nucleus. It is found in the chromosome. In terms of biological role, core component of nucleosome. Nucleosomes wrap and compact DNA into chromatin, limiting DNA accessibility to the cellular machineries which require DNA as a template. Histones thereby play a central role in transcription regulation, DNA repair, DNA replication and chromosomal stability. DNA accessibility is regulated via a complex set of post-translational modifications of histones, also called histone code, and nucleosome remodeling. The sequence is that of Histone H2A.2 from Leishmania infantum.